A 196-amino-acid polypeptide reads, in one-letter code: UPF0301 protein BF2109 (196 aa).

The protein belongs to the UPF0301 (AlgH) family.

The polypeptide is UPF0301 protein BF2109 (Bacteroides fragilis (strain ATCC 25285 / DSM 2151 / CCUG 4856 / JCM 11019 / LMG 10263 / NCTC 9343 / Onslow / VPI 2553 / EN-2)).